The following is a 193-amino-acid chain: Crossover junction endodeoxyribonuclease RuvC (193 aa).

Residues Asp7, Glu68, and Asp141 contribute to the active site. Mg(2+)-binding residues include Asp7, Glu68, and Asp141. Positions 174-193 are disordered; that stretch reads RQWAQATQHATRRRGVRRGM. Over residues 183 to 193 the composition is skewed to basic residues; that stretch reads ATRRRGVRRGM.

It belongs to the RuvC family. As to quaternary structure, homodimer which binds Holliday junction (HJ) DNA. The HJ becomes 2-fold symmetrical on binding to RuvC with unstacked arms; it has a different conformation from HJ DNA in complex with RuvA. In the full resolvosome a probable DNA-RuvA(4)-RuvB(12)-RuvC(2) complex forms which resolves the HJ. The cofactor is Mg(2+).

It is found in the cytoplasm. The catalysed reaction is Endonucleolytic cleavage at a junction such as a reciprocal single-stranded crossover between two homologous DNA duplexes (Holliday junction).. Its function is as follows. The RuvA-RuvB-RuvC complex processes Holliday junction (HJ) DNA during genetic recombination and DNA repair. Endonuclease that resolves HJ intermediates. Cleaves cruciform DNA by making single-stranded nicks across the HJ at symmetrical positions within the homologous arms, yielding a 5'-phosphate and a 3'-hydroxyl group; requires a central core of homology in the junction. The consensus cleavage sequence is 5'-(A/T)TT(C/G)-3'. Cleavage occurs on the 3'-side of the TT dinucleotide at the point of strand exchange. HJ branch migration catalyzed by RuvA-RuvB allows RuvC to scan DNA until it finds its consensus sequence, where it cleaves and resolves the cruciform DNA. The chain is Crossover junction endodeoxyribonuclease RuvC from Bifidobacterium animalis subsp. lactis (strain AD011).